Reading from the N-terminus, the 130-residue chain is Small ribosomal subunit protein uS9 (130 aa).

The protein belongs to the universal ribosomal protein uS9 family.

The chain is Small ribosomal subunit protein uS9 from Blochmanniella floridana.